We begin with the raw amino-acid sequence, 146 residues long: UPF0260 protein SO_2573 (146 aa).

The protein belongs to the UPF0260 family.

This chain is UPF0260 protein SO_2573, found in Shewanella oneidensis (strain ATCC 700550 / JCM 31522 / CIP 106686 / LMG 19005 / NCIMB 14063 / MR-1).